Reading from the N-terminus, the 879-residue chain is MKSLTSAEIRQMFIDFFKEKSHSVEPSASLVPHEDPTLLWINSGVATLKKYFDGRVIPDNPRIVNAQKSIRTNDIENVGYTARHHTFFEMLGNFSIGDYFKKEAMEWAWEFLTDEKWINFDEALLSVTVHPEDDEAYDIWLNDIGIPKERIIRIEENFWDIGEGPSGPNTEIFYDRGESYGNDPQDPELYPGGENNRYLEVWNLVFSQFNHNPDDTYTPLPKKNIDTGMGLERLTSIIQQVPTNFETDLFMPIIRETERISKRKYGNSEAEDTSFKVIADHIRTVSFAIGDGAMPSNEGRGYVLRRLIRRAIRFAKDLGVNEPFMYQLVPVVGDIMKDFYPEVQKDAGYISNVIKVEEERFHETLNDGLIILASIIEEERKKGSEVFPGEEVFRLYDTYGFPKELTEEYVEQQGFTVNQAGYDKEMNKQRERARNARQKVDSMQVQDTIFTEINVDSTFVGYDQLQKETTIEALVKDKNQIEEANQGDVLYVFLKETPFYAESGGQVADNGWIYSENASAYVSDVQKSPNGDHIHQIEIKEGSFKINQPVHAVVERTFRNHVIKNHTATHLLHQALKDVLGSHVNQAGSLVRPERLRFDFSHFHGVTAEELQQIELKVNEKIWESLPVAIDSKKIDEAKAMGAMALFGEKYGDIVRVVQIGDYSIELCGGCHVINTAEIGLFKIVQETGIGAGTRRIEAVTSKQAYDYLNTKLDLLHNSAQKLKTSEEQLPERIEGLQVELKDSQKQVDSLSAKLSNLEASSILDEVKEISGVPVLAQEVNVKDMNQLRSMMDELKQKLSSGVILLAAENNGKVQLVAGVTKDMLEKNMHAGNIVKQAATVCGGGGGGRPDMAQAGGKDPSKIKEALQSVEQYIVDTVK.

Zn(2+) contacts are provided by His566, His570, Cys668, and His672.

This sequence belongs to the class-II aminoacyl-tRNA synthetase family. Zn(2+) serves as cofactor.

The protein localises to the cytoplasm. The catalysed reaction is tRNA(Ala) + L-alanine + ATP = L-alanyl-tRNA(Ala) + AMP + diphosphate. Catalyzes the attachment of alanine to tRNA(Ala) in a two-step reaction: alanine is first activated by ATP to form Ala-AMP and then transferred to the acceptor end of tRNA(Ala). Also edits incorrectly charged Ser-tRNA(Ala) and Gly-tRNA(Ala) via its editing domain. This chain is Alanine--tRNA ligase, found in Oceanobacillus iheyensis (strain DSM 14371 / CIP 107618 / JCM 11309 / KCTC 3954 / HTE831).